The chain runs to 435 residues: 3-ketoacyl-CoA thiolase (435 aa).

Catalysis depends on Cys-98, which acts as the Acyl-thioester intermediate. Catalysis depends on proton acceptor residues His-391 and Cys-421.

Belongs to the thiolase-like superfamily. Thiolase family. In terms of assembly, heterotetramer of two alpha chains (FadJ) and two beta chains (FadI).

Its subcellular location is the cytoplasm. The enzyme catalyses an acyl-CoA + acetyl-CoA = a 3-oxoacyl-CoA + CoA. The protein operates within lipid metabolism; fatty acid beta-oxidation. In terms of biological role, catalyzes the final step of fatty acid oxidation in which acetyl-CoA is released and the CoA ester of a fatty acid two carbons shorter is formed. The protein is 3-ketoacyl-CoA thiolase of Vibrio vulnificus (strain YJ016).